Reading from the N-terminus, the 254-residue chain is MTLLQPFSALLLCLSLMMATSLLTTDKPEEKMYSCPIIQCSAPAVNGLPGRDGRDGPKGEKGDPGEGLRGLQGLPGKAGPQGLKGEVGPQGEKGQKGERGIAVTDDLHRQITDLEAKIRVLEDDLSRYKKALSLKDFVNVGKKMFVSTGKKYNFEKGKSLCAKAGSVLASPRNEAENTALKDLIDPSSQAYIGISDAQTEGRFMYLSGGPLTYSNWKPGEPNNHKNEDCAVIEDSGKWNDLDCSNSNIFIICEL.

The signal sequence occupies residues 1–19 (MTLLQPFSALLLCLSLMMA). The interval 46–99 (NGLPGRDGRDGPKGEKGDPGEGLRGLQGLPGKAGPQGLKGEVGPQGEKGQKGER) is disordered. A compositionally biased stretch (basic and acidic residues) spans 51-66 (RDGRDGPKGEKGDPGE). P57 bears the 4-hydroxyproline mark. A 5-hydroxylysine mark is found at K58 and K61. 2 O-linked (Gal...) hydroxylysine glycosylation sites follow: K58 and K61. P75 carries the 4-hydroxyproline modification. K93 and K96 each carry 5-hydroxylysine. The 111-residue stretch at 140–250 (VGKKMFVSTG…LDCSNSNIFI (111 aa)) folds into the C-type lectin domain. Disulfide bonds link C161–C252 and C229–C243.

Oligomeric complex of 3 or more homotrimers.

The protein resides in the secreted. Functionally, calcium-dependent lectin involved in innate immune defense. Binds mannose, fucose and N-acetylglucosamine on different microorganisms and activates the lectin complement pathway. This Gallus gallus (Chicken) protein is Mannose-binding protein.